The sequence spans 513 residues: TRAF3-interacting JNK-activating modulator (513 aa).

3 disordered regions span residues 1–96 (MISS…GQVS), 130–171 (SSGI…KAEE), and 381–402 (SLQG…QLKK). Residues 1 to 485 (MISSDSRSSP…QLQVKENELQ (485 aa)) lie on the Cytoplasmic side of the membrane. 2 stretches are compositionally biased toward basic and acidic residues: residues 17–31 (ESYE…ETRE) and 69–79 (RNLEEEKKGQA). Residues 266-488 (MKKVLLEMED…VKENELQCGQ (223 aa)) adopt a coiled-coil conformation. The segment covering 386 to 397 (GEQQSSETQDLQ) has biased composition (polar residues). Residues 486–506 (CGQWLPVLMVVIATALAVFLA) form a helical; Anchor for type IV membrane protein membrane-spanning segment. The Extracellular segment spans residues 507–513 (NKGNLVI).

Interacts (via its coiled-coil domain) with TRAF3 (via isoleucine zipper). Interacts with MAP2K1. Interacts with PPP2CA; this interaction targets PPP2CA to the lysosomes. Interacts with MAVS. Interacts with TBK1. Expressed in bone marrow, spleen and thymus. Not detected in heart, kidney and liver.

Its subcellular location is the cell membrane. It localises to the golgi apparatus membrane. The protein localises to the lysosome membrane. The protein resides in the mitochondrion outer membrane. Functionally, adapter protein that plays essential roles in both innate and adaptive immunity. Plays a crucial role in the regulation of thymocyte development. Mechanistically, mediates TCR-stimulated activation through recruiting MAP2K1/MEK1 to the Golgi and, thereby, facilitating the interaction of MAP2K1/MEK1 with its activator BRAF. Also plays an essential role in regulatory T-cell stability and function by recruiting the serine-threonine phosphatase catalytic subunit (PPP2CA) to the lysosome, thereby facilitating the interaction of PP2Ac with the mTORC1 component RPTOR and restricting glycolytic metabolism. Positively regulates TLR4 signaling activity in macrophage-mediated inflammation by acting as a molecular clamp to facilitate LPS-induced translocation of TLR4 to lipid rafts. In response to viral infection, facilitates the recruitment of TRAF3 to MAVS within mitochondria leading to IRF3 activation and interferon production. However, participates in the maintenance of immune homeostasis and the prevention of overzealous innate immunity by promoting 'Lys-48'-dependent ubiquitination of TBK1. In Mus musculus (Mouse), this protein is TRAF3-interacting JNK-activating modulator (Traf3ip3).